The sequence spans 393 residues: Cysteine protease ATG4B (393 aa).

Met1 bears the N-acetylmethionine mark. Phosphoserine; by PKB/AKT1 and PKB/AKT2 is present on Ser34. The active-site Nucleophile is the Cys74. Cys189 is modified (S-nitrosocysteine). Active-site residues include Asp278 and His280. An S-nitrosocysteine mark is found at Cys292 and Cys301. Cys292 and Cys361 are disulfide-bonded. Ser316 is subject to Phosphoserine; by ULK1. Ser383 is subject to Phosphoserine; by STK26. The LIR signature appears at 388–391 (FEIL). Residue Ser392 is modified to Phosphoserine.

It belongs to the peptidase C54 family. Interacts with PFKP; promoting phosphorylation of ATG4B at Ser-34. Interacts with GBP7. Post-translationally, phosphorylation at Ser-383 and Ser-392 promotes autophagy by increasing protein delipidation activity without affecting proteolytic activation of ATG8 proteins. Phosphorylation at Ser-316 by ULK1 inhibits autophagy by decreasing both proteolytic activation and delipidation activities. Phosphorylation at Ser-316 is dephosphorylated by protein phosphatase 2A (PP2A). Phosphorylation at Ser-34 by AKT2 promotes its hydrolase activity, leading to increased proteolytic activation and delipidation of ATG8 family proteins. Phosphorylation at Ser-34 by AKT1 promotes mitochondrial localization and inhibition of the F1F0-ATP synthase activity, leading to elevation of mitochondrial reactive oxygen species (ROS). Ubiquitinated by RNF5, leading to its degradation by the proteasome. In terms of processing, S-nitrosylation at Cys-189 and Cys-292 in response to high glucose decreases both proteolytic activation and delipidation activities. Post-translationally, O-glycosylated by OGT, leading to increase protease activity, thereby promoting the proteolytic activation of ATG8 family proteins. Forms reversible intrachain disulfide bonds in response to oxidative stress. Forms interchain disulfide bonds, leading to formation of homooligomers in response to oxidation.

It is found in the cytoplasm. The protein localises to the cytosol. Its subcellular location is the cytoplasmic vesicle. It localises to the autophagosome. The protein resides in the endoplasmic reticulum. It is found in the mitochondrion. The catalysed reaction is [protein]-C-terminal L-amino acid-glycyl-phosphatidylethanolamide + H2O = [protein]-C-terminal L-amino acid-glycine + a 1,2-diacyl-sn-glycero-3-phosphoethanolamine. It catalyses the reaction [protein]-C-terminal L-amino acid-glycyl-phosphatidylserine + H2O = [protein]-C-terminal L-amino acid-glycine + a 1,2-diacyl-sn-glycero-3-phospho-L-serine. Its activity is regulated as follows. Inhibited by N-ethylmaleimide. Redox-regulated during autophagy since reducing conditions activate ATG4A whereas an oxidizing environment such as the presence of H(2)O(2) inhibits its activity. The cysteine protease activity compounds is inhibited by styrylquinoline compounds 4-28 and LV-320. Functionally, cysteine protease that plays a key role in autophagy by mediating both proteolytic activation and delipidation of ATG8 family proteins. Required for canonical autophagy (macroautophagy), non-canonical autophagy as well as for mitophagy. The protease activity is required for proteolytic activation of ATG8 family proteins: cleaves the C-terminal amino acid of ATG8 proteins MAP1LC3A, MAP1LC3B, MAP1LC3C, GABARAPL1, GABARAPL2 and GABARAP, to reveal a C-terminal glycine. Exposure of the glycine at the C-terminus is essential for ATG8 proteins conjugation to phosphatidylethanolamine (PE) and insertion to membranes, which is necessary for autophagy. Protease activity is also required to counteract formation of high-molecular weight conjugates of ATG8 proteins (ATG8ylation): acts as a deubiquitinating-like enzyme that removes ATG8 conjugated to other proteins, such as ATG3. In addition to the protease activity, also mediates delipidation of ATG8 family proteins. Catalyzes delipidation of PE-conjugated forms of ATG8 proteins during macroautophagy. Also involved in non-canonical autophagy, a parallel pathway involving conjugation of ATG8 proteins to single membranes at endolysosomal compartments, by catalyzing delipidation of ATG8 proteins conjugated to phosphatidylserine (PS). Compared to other members of the family (ATG4A, ATG4C or ATG4C), constitutes the major protein for proteolytic activation of ATG8 proteins, while it displays weaker delipidation activity than other ATG4 paralogs. Involved in phagophore growth during mitophagy independently of its protease activity and of ATG8 proteins: acts by regulating ATG9A trafficking to mitochondria and promoting phagophore-endoplasmic reticulum contacts during the lipid transfer phase of mitophagy. The sequence is that of Cysteine protease ATG4B from Homo sapiens (Human).